The primary structure comprises 71 residues: Putative membrane protein insertion efficiency factor (71 aa).

This sequence belongs to the UPF0161 family.

Its subcellular location is the cell inner membrane. Functionally, could be involved in insertion of integral membrane proteins into the membrane. This is Putative membrane protein insertion efficiency factor from Nitrosospira multiformis (strain ATCC 25196 / NCIMB 11849 / C 71).